The primary structure comprises 197 residues: Protein Hikeshi (197 aa).

The interval 18–55 is required for F-X-F-G repeats-nucleoporins recognition and nuclear import; it reads VAEDKFVFDLPDYESINHVVVFMLGTIPFPEGMGGSVY. The interval 124–134 is flexible linker region involved in nuclear import of HSP70 proteins; it reads QTPVGNAAVSS.

It belongs to the OPI10 family. Forms an asymmetric homodimer; required for binding and nuclear import of HSP70 proteins. Interacts with ATP-bound HSP70 proteins. Interacts with NUP62 and NUP153 (via F-X-F-G repeats). Interacts with HSPA8.

Its subcellular location is the cytoplasm. It is found in the cytosol. The protein localises to the nucleus. Its function is as follows. Acts as a specific nuclear import carrier for HSP70 proteins following heat-shock stress: acts by mediating the nucleoporin-dependent translocation of ATP-bound HSP70 proteins into the nucleus. HSP70 proteins import is required to protect cells from heat shock damages. Does not translocate ADP-bound HSP70 proteins into the nucleus. The polypeptide is Protein Hikeshi (Homo sapiens (Human)).